A 284-amino-acid polypeptide reads, in one-letter code: Bifunctional protein FolD (284 aa).

Residues 165–167 (GRS), S190, and I231 each bind NADP(+).

The protein belongs to the tetrahydrofolate dehydrogenase/cyclohydrolase family. In terms of assembly, homodimer.

The enzyme catalyses (6R)-5,10-methylene-5,6,7,8-tetrahydrofolate + NADP(+) = (6R)-5,10-methenyltetrahydrofolate + NADPH. It carries out the reaction (6R)-5,10-methenyltetrahydrofolate + H2O = (6R)-10-formyltetrahydrofolate + H(+). It participates in one-carbon metabolism; tetrahydrofolate interconversion. Functionally, catalyzes the oxidation of 5,10-methylenetetrahydrofolate to 5,10-methenyltetrahydrofolate and then the hydrolysis of 5,10-methenyltetrahydrofolate to 10-formyltetrahydrofolate. The polypeptide is Bifunctional protein FolD (Dechloromonas aromatica (strain RCB)).